Reading from the N-terminus, the 302-residue chain is RNA polymerase II holoenzyme cyclin-like subunit (302 aa).

Residues 53-142 (QQLIKLGKRM…LGECEFSLIS (90 aa)) form the Cyclin N-terminal domain.

This sequence belongs to the cyclin family. Cyclin C subfamily. In terms of assembly, component of the srb8-11 complex, a regulatory module of the Mediator complex.

It is found in the nucleus. Component of the srb8-11 complex. The srb8-11 complex is a regulatory module of the Mediator complex which is itself involved in regulation of basal and activated RNA polymerase II-dependent transcription. The srb8-11 complex may be involved in the transcriptional repression of a subset of genes regulated by Mediator. It may inhibit the association of the Mediator complex with RNA polymerase II to form the holoenzyme complex. The srb8-11 complex phosphorylates the C-terminal domain (CTD) of the largest subunit of RNA polymerase II. The protein is RNA polymerase II holoenzyme cyclin-like subunit (ssn8) of Aspergillus fumigatus (strain ATCC MYA-4609 / CBS 101355 / FGSC A1100 / Af293) (Neosartorya fumigata).